The primary structure comprises 544 residues: Chaperonin GroEL 2 (544 aa).

ATP contacts are provided by residues 29 to 32, 86 to 90, Gly413, 479 to 481, and Asp495; these read TLGP, DGTTT, and NAA.

It belongs to the chaperonin (HSP60) family. In terms of assembly, forms a cylinder of 14 subunits composed of two heptameric rings stacked back-to-back. Interacts with the co-chaperonin GroES.

The protein resides in the cytoplasm. The enzyme catalyses ATP + H2O + a folded polypeptide = ADP + phosphate + an unfolded polypeptide.. Its function is as follows. Together with its co-chaperonin GroES, plays an essential role in assisting protein folding. The GroEL-GroES system forms a nano-cage that allows encapsulation of the non-native substrate proteins and provides a physical environment optimized to promote and accelerate protein folding. This Synechococcus sp. (strain CC9605) protein is Chaperonin GroEL 2.